We begin with the raw amino-acid sequence, 25 residues long: Retinol-binding protein 3 (25 aa).

It is found in the secreted. The protein resides in the extracellular space. It localises to the extracellular matrix. The protein localises to the interphotoreceptor matrix. IRBP shuttles 11-cis and all trans retinoids between the retinol isomerase in the pigment epithelium and the visual pigments in the photoreceptor cells of the retina. This is Retinol-binding protein 3 (RBP3) from Sus scrofa (Pig).